The following is a 66-amino-acid chain: Large ribosomal subunit protein bL35 (66 aa).

Basic residues-rich tracts occupy residues methionine 1 to lysine 15 and isoleucine 22 to arginine 43. The interval methionine 1 to arginine 43 is disordered.

It belongs to the bacterial ribosomal protein bL35 family.

The protein is Large ribosomal subunit protein bL35 of Dictyoglomus turgidum (strain DSM 6724 / Z-1310).